The sequence spans 92 residues: Large ribosomal subunit protein eL43 (92 aa).

The C4-type zinc finger occupies 39 to 60 (CSFCGKKAVKRGAAGIWNCSSC).

It belongs to the eukaryotic ribosomal protein eL43 family.

This is Large ribosomal subunit protein eL43 (RPL43) from Eremothecium gossypii (strain ATCC 10895 / CBS 109.51 / FGSC 9923 / NRRL Y-1056) (Yeast).